A 483-amino-acid polypeptide reads, in one-letter code: Cysteine--tRNA ligase (483 aa).

Cysteine 29 contributes to the Zn(2+) binding site. The 'HIGH' region signature appears at 31 to 41 (ITVYDYCHLGH). 3 residues coordinate Zn(2+): cysteine 215, histidine 240, and glutamate 244. The 'KMSKS' region motif lies at 272-276 (KMSKS). An ATP-binding site is contributed by lysine 275.

Belongs to the class-I aminoacyl-tRNA synthetase family. As to quaternary structure, monomer. The cofactor is Zn(2+).

It localises to the cytoplasm. It carries out the reaction tRNA(Cys) + L-cysteine + ATP = L-cysteinyl-tRNA(Cys) + AMP + diphosphate. This Synechocystis sp. (strain ATCC 27184 / PCC 6803 / Kazusa) protein is Cysteine--tRNA ligase (cysS).